The chain runs to 847 residues: Pep5-like zinc finger protein C16A10.03c (847 aa).

The CHCR repeat unit spans residues 387 to 526 (YIEAIPFSDS…GIWLFNSDPM (140 aa)). Residues 780–814 (CDNCEGLLDVPFVSYSCLHLVHRDCATETVCPKCK) form an RING-type; atypical zinc finger.

It localises to the cytoplasm. It is found in the nucleus. In Schizosaccharomyces pombe (strain 972 / ATCC 24843) (Fission yeast), this protein is Pep5-like zinc finger protein C16A10.03c.